The following is a 259-amino-acid chain: DNA-directed RNA polymerase 30 kDa polypeptide (259 aa).

A TFIIS-type zinc finger spans residues 155–195 (YNTPCPNCKSRNTTPMMIQTRAADEPPLVRHACRDCKQHFK). Zn(2+) is bound by residues Cys159, Cys162, Cys187, and Cys190. A disordered region spans residues 220 to 259 (EILPDNNPSPPESPEPASPIDDGLIRATFDRNDEPPEDDE). A compositionally biased stretch (pro residues) spans 226-236 (NPSPPESPEPA).

This sequence belongs to the poxviridae DNA-directed RNA polymerase 30 kDa subunit family. The DNA-dependent RNA polymerase (vRNAP) consists of eight subunits encoded by early viral genes and termed according to their apparent molecular masses Rpo147, Rpo132, Rpo35, Rpo30, Rpo22, Rpo19, Rpo18, and Rpo7. The same holoenzyme, with the addition of the transcription-specificity factor RAP94, is used for early gene expression.

The protein localises to the virion. Its subcellular location is the host cytoplasm. The catalysed reaction is RNA(n) + a ribonucleoside 5'-triphosphate = RNA(n+1) + diphosphate. In terms of biological role, part of the DNA-dependent RNA polymerase which catalyzes the transcription of viral DNA into RNA using the four ribonucleoside triphosphates as substrates. Responsible for the transcription of early, intermediate and late genes. DNA-dependent RNA polymerase associates with the early transcription factor (ETF), itself composed of OPG118 and OPG134, thereby allowing the early genes transcription. Late transcription, and probably also intermediate transcription, require newly synthesized RNA polymerase. This is DNA-directed RNA polymerase 30 kDa polypeptide (OPG066) from Bos taurus (Bovine).